Here is a 1698-residue protein sequence, read N- to C-terminus: Protein 4.1 homolog (1698 aa).

The tract at residues 1-31 (MPAEIKPSAPAEPETPTKSKPKSSSSSHGKP) is disordered. Residues 12-27 (EPETPTKSKPKSSSSS) are compositionally biased toward low complexity. Residues 32–314 (ALARVTLLDG…EHHTFFRLMT (283 aa)) enclose the FERM domain. The hydrophilic stretch occupies residues 317-434 (PVSKSKMFPV…KEEKERKERE (118 aa)). Disordered stretches follow at residues 335-361 (GRTQAESTNTPVDRTPPKFNRTLSGAR) and 374-710 (EKEK…SDPT). The span at 374–448 (EKEKVARKSS…EEKKKAEKAA (75 aa)) shows a compositional bias: basic and acidic residues. Residues 449–461 (KAALAAGAAAGAA) show a composition bias toward low complexity. A phosphoserine mark is found at Ser-471, Ser-474, and Ser-478. The segment covering 499–514 (KDGKDKSGKDKDKEVG) has biased composition (basic and acidic residues). The span at 562-571 (DGNTSPTRKS) shows a compositional bias: polar residues. Residue Ser-566 is modified to Phosphoserine. A compositionally biased stretch (basic and acidic residues) spans 579-589 (YDQDPNSRKSG). The span at 594–603 (EQLSPTSQQK) shows a compositional bias: polar residues. Basic and acidic residues predominate over residues 618–627 (ALKETAEKLK). Ser-659 and Ser-687 each carry phosphoserine. Residues 684-696 (RSYSPTKGPQGYS) are compositionally biased toward polar residues. The residue at position 689 (Thr-689) is a Phosphothreonine. Residues Ser-697, Ser-1398, Ser-1401, and Ser-1402 each carry the phosphoserine modification. The tract at residues 1286–1698 (GEIVQVDPND…EKIEIQQQTQ (413 aa)) is C-terminal (CTD). Phosphothreonine is present on Thr-1407. Over residues 1509–1532 (LGKNAKTEQLEEKTVATTRTHDPN) the composition is skewed to basic and acidic residues. Positions 1509 to 1599 (LGKNAKTEQL…SPLFTTSATT (91 aa)) are disordered. The span at 1533-1554 (KQQQRVVTQEVKTTATVTSGDQ) shows a compositional bias: polar residues. Positions 1561-1571 (VSSTSSGDSGT) are enriched in low complexity. Residues 1584 to 1599 (RTDNQKSPLFTTSATT) show a composition bias toward polar residues. At Ser-1590 the chain carries Phosphoserine.

In terms of tissue distribution, at onset of germ band retraction, expression is seen in epidermis, hindgut and foregut. During retraction, expression extends to tracheal branches and salivary glands.

It localises to the cell junction. The protein resides in the septate junction. In terms of biological role, an integral component of the septate junction. May play a role in cell-cell interactions that are necessary for proper development. Vital for embryonic development. In Drosophila melanogaster (Fruit fly), this protein is Protein 4.1 homolog (cora).